Consider the following 740-residue polypeptide: Probable apyrase 7 (740 aa).

Over 1–113 (MVFGRITELF…PSTRRKLIRA (113 aa)) the chain is Cytoplasmic. The helical transmembrane segment at 114-134 (VMIVMCLFLFAFLVYIVSMYI) threads the bilayer. The Extracellular segment spans residues 135–581 (YTNWSRGASR…LKSYETLSMK (447 aa)). A glycan (N-linked (GlcNAc...) asparagine) is linked at Asn-137. 147–157 (VVFDCGSTGTR) contributes to the ATP binding site. Asn-208 carries N-linked (GlcNAc...) asparagine glycosylation. The active-site Proton acceptor is Glu-284. ATP is bound at residue 309 to 319 (GALDLGGSSLQ). Residues Asn-330, Asn-374, Asn-439, and Asn-484 are each glycosylated (N-linked (GlcNAc...) asparagine). A helical membrane pass occupies residues 582 to 602 (INPIALISILILSLLLLLCAL). Over 603–740 (SRVSNCLPRF…SLADSHMLKM (138 aa)) the chain is Cytoplasmic. Positions 706 to 740 (FWSSPRRSQMRLQSRRSQSREDLSSSLADSHMLKM) are disordered. Residues 708–721 (SSPRRSQMRLQSRR) are compositionally biased toward low complexity.

The protein belongs to the GDA1/CD39 NTPase family. Ca(2+) serves as cofactor. Detected in mature pollen grains. Also expressed in more diverse tissues such as roots, leaves, stems, pistils and sepals. More particularly expressed in the vascular bundle.

It localises to the membrane. The enzyme catalyses a ribonucleoside 5'-triphosphate + 2 H2O = a ribonucleoside 5'-phosphate + 2 phosphate + 2 H(+). Functionally, catalyzes the hydrolysis of phosphoanhydride bonds of nucleoside tri- and di-phosphates. Involved in the regulation of pollen and anther development. The sequence is that of Probable apyrase 7 (APY7) from Arabidopsis thaliana (Mouse-ear cress).